The chain runs to 457 residues: Amidophosphoribosyltransferase (457 aa).

Cys-2 acts as the Nucleophile in catalysis. Residues 2-223 enclose the Glutamine amidotransferase type-2 domain; sequence CGVVGIYHPD…PGKAAIIKDG (222 aa). Cys-239 contacts [4Fe-4S] cluster. Mg(2+)-binding residues include Ser-286, Asp-348, and Asp-349. [4Fe-4S] cluster contacts are provided by Cys-385, Cys-438, and Cys-441.

This sequence in the C-terminal section; belongs to the purine/pyrimidine phosphoribosyltransferase family. Mg(2+) is required as a cofactor. It depends on [4Fe-4S] cluster as a cofactor.

The enzyme catalyses 5-phospho-beta-D-ribosylamine + L-glutamate + diphosphate = 5-phospho-alpha-D-ribose 1-diphosphate + L-glutamine + H2O. The protein operates within purine metabolism; IMP biosynthesis via de novo pathway; N(1)-(5-phospho-D-ribosyl)glycinamide from 5-phospho-alpha-D-ribose 1-diphosphate: step 1/2. Catalyzes the formation of phosphoribosylamine from phosphoribosylpyrophosphate (PRPP) and glutamine. This is Amidophosphoribosyltransferase from Archaeoglobus fulgidus (strain ATCC 49558 / DSM 4304 / JCM 9628 / NBRC 100126 / VC-16).